A 320-amino-acid polypeptide reads, in one-letter code: R2-like ligand binding oxidase (320 aa).

Mn(2+)-binding residues include glutamate 68, glutamate 101, and histidine 104. A cross-link (3-(O4'-tyrosyl)-valine (Val-Tyr)) is located at residues 71-162 (VTKDIQPFMS…AAQVRASVVY (92 aa)). Glutamate 101 provides a ligand contact to Fe cation. Fe cation contacts are provided by glutamate 167, glutamate 202, and histidine 205.

It belongs to the ribonucleoside diphosphate reductase small chain family. R2-like ligand binding oxidase subfamily. Homodimer. Fe cation is required as a cofactor. Requires Mn(2+) as cofactor.

Its function is as follows. Probable oxidase that might be involved in lipid metabolism. The sequence is that of R2-like ligand binding oxidase (nrdB) from Mycolicibacterium smegmatis (strain ATCC 700084 / mc(2)155) (Mycobacterium smegmatis).